The primary structure comprises 292 residues: Elongation factor Ts (292 aa).

Residues 80–83 (TDFV) form an involved in Mg(2+) ion dislocation from EF-Tu region.

It belongs to the EF-Ts family.

It localises to the cytoplasm. Its function is as follows. Associates with the EF-Tu.GDP complex and induces the exchange of GDP to GTP. It remains bound to the aminoacyl-tRNA.EF-Tu.GTP complex up to the GTP hydrolysis stage on the ribosome. The chain is Elongation factor Ts from Ralstonia nicotianae (strain ATCC BAA-1114 / GMI1000) (Ralstonia solanacearum).